The sequence spans 971 residues: GEM-interacting protein (971 aa).

Serine 19 carries the post-translational modification Phosphoserine. 3 disordered regions span residues 41 to 79 (AGDP…PEGP), 231 to 267 (LRAR…AQAK), and 383 to 476 (DTKK…IENG). Residues 44–56 (PVRREDLEPDKAD) show a composition bias toward basic and acidic residues. A compositionally biased stretch (polar residues) spans 59–69 (TVVTEENSEAS). A phosphoserine mark is found at serine 75, serine 235, serine 238, serine 247, serine 436, and serine 440. Positions 85–348 (EELDLRLIRT…CCVPFEPGQR (264 aa)) constitute an F-BAR domain. Positions 458–471 (SSDDFEERDPDLGD) are enriched in acidic residues. Residues 492–536 (THRLRRLRGPAKCRECEAFMVSGTECEECFLTCHKRCLETLLILC) form a Phorbol-ester/DAG-type zinc finger. Positions 553–756 (LQLPRDFPEE…FLIVHYEQIF (204 aa)) constitute a Rho-GAP domain. Phosphothreonine is present on threonine 659. Residues 799-865 (IALDSSPDPK…LGAQSRGHFS (67 aa)) form a disordered region. The span at 805–817 (PDPKHHSALEKCP) shows a compositional bias: basic and acidic residues. Phosphoserine occurs at positions 884, 908, and 924.

As to quaternary structure, interacts with GEM through its N-terminal.

Stimulates, in vitro and in vivo, the GTPase activity of RhoA. This Mus musculus (Mouse) protein is GEM-interacting protein (Gmip).